The chain runs to 99 residues: Class II hydrophobin B (99 aa).

An N-terminal signal peptide occupies residues 1 to 15 (MKFFAIAALFAGALA). Intrachain disulfides connect Cys30–Cys79 and Cys40–Cys70.

It belongs to the cerato-ulmin hydrophobin family.

It localises to the secreted. The protein localises to the cell wall. It is found in the vacuole. The protein resides in the cytoplasmic vesicle. Its function is as follows. Aerial growth, conidiation, and dispersal of filamentous fungi in the environment rely upon a capability of their secreting small amphipathic proteins called hydrophobins (HPBs) with low sequence identity. Class I can self-assemble into an outermost layer of rodlet bundles on aerial cell surfaces, conferring cellular hydrophobicity that supports fungal growth, development and dispersal; whereas Class II form highly ordered films at water-air interfaces through intermolecular interactions but contribute nothing to the rodlet structure. Hyd2B contributes to certain cell wall-related features, such as hydrophobicity but is not involved in cell wall-related events during fungal proliferation in host hemocoel. Does not contribute to conidial hydrophobicity. Involved in insect hemocoel colonization independent of cell hydrophobicity. The sequence is that of Class II hydrophobin B from Beauveria bassiana (strain ARSEF 2860) (White muscardine disease fungus).